A 2067-amino-acid chain; its full sequence is MSEVRKFTKRLSKPGTAAELRQSVSEAVRTSIAVEQPKIIEPLDYENVVFQRKAQIHSDPQRDLLLWPADDVSEAHIDRHRRTINPSVPQNAENEAKSLFAKECIKMYNTNWHVINYNYEAYSGDFRMLPCKGMKTEKLPSQVFEVDEGEEDSSSLCSQRGGVMKQGWLQKANINSSLSVSMKVFKRRYFYLSQLPDGSYILNSYKDEKNYKESKGSIYLDSCIDVVPCPKMRRNGFELKMQERYSHYLAADSEAEMEDWVNTIKQALLSTMEDRRNGSETSEGSLDDDSSSQGKPESITESFGRSLHPELMKYARETDQLSKMSRNEGRQKIFSLDPEVQRLDFSGIEPDVKPFEERFGRRIMVSCHNLTFNLQGCVSEKNDGVLTNVEPFFISLALFDLSKGCKISADFHVDLNPPCVREMIQTGSAGTPTEAGEDENDPVKMNGHGLPLLQRVAESLLHFPTQGIFSVTNPHADIFLLARVEKVLQNGITHCADPYIKPSDISKTVQKVLKTAKQTCQRLGQYRMPFAWAAKQVFKDSQGTLDTDGKFSPLYRQDSSKISTEDLIKLLTDLKKPEKNKLQIIPGQINITVECVPPDLSNSVTSSYIPVKPFADQCDSVSVEVEEFVPEEARFNHPFTIYNNHLYIYPQQLKYDSQKAFDKARNIAVCVQFKDSDEEGSSPLKCIYGKPGDPLFTTSAFAAVLHHNQSPEFYDEIKIELPVHIHEKHHILFTFYHISCDLGTKTTSKKREGVETLVGYSWTPLLKDGRIKSSDLQLPVSANLLAGYLCDKSQDIKKVFPYIKWVDNAKPLFKVRAYVASTIYTQDLHLHNFFQHCQLMRSTSQGNPAELIKYLKCLHAVETQVVIKFLPTVLVQLFEVLSMASKEGQDVAVNSTRVIIHIVSQCHEEGLEHYLRSFLKYVFRINNATSENSVTTHEVLATAVTVILKQTADINTCNKLLKYSWFFFETMARSMAQYLMDGNRMKMPRAQRFPESFQQALQCLLLSIMPHITIRYVEIPEEARCVNFSLACFIKRCLTFMNRGFAFSLINDYMCGFSLKDPKVLTEMKFDFLMTVCNHEHYIPLNLPMAFGRTKLQRVQDFISYAAECFGVVDQSLEYSLTEDYCKNHFLVGLLLREVADGLQACPEIRQLAVAVLKNLMIKHAMDDRYNAFKNQQARICLLYLPLFELLYQNLSQMNSPRQMCRNGLGLMYRDDLSVDSRRSSTIVDKEPSGSVTQNGLSRRGESRGSMYGDPGTPDINELHRRGSTMSTVPAAGRLGQYEIRGLLLCYLHIVRTLSDDTLTAYWSKVNPQDIMNFLSLLEICIIQFRYVGRRNISRSQEPWVSKLFSPERKSQTMPVLRGRASLMQAKLQQFSTMDTSLTLNMAGGPTEAEINHQSLLEGNTSTEVCLTVLDVLSLFTQSFKNQLLDSDGHNALMTKIFDTYLTLLKVGQSETAIKHIFASLRAFIVKFQVPLFKGRVVLCGSLCYEVLKCCMSKLSVLRGEASALLYLLMRHNFDYTKRKSFLRVHLQIIIAVSQLIADVALTGSSRFQESLSIINNFANSDKIMKTTTFPSEVKGLTMRIRTVLMATAQMREHEKDPEMLLDLQYSLARSYASTPELRRTWLDSMARAHSKNGDFSEAAMCNVHVAALMAEYLHRKKLFPSGLAAFKRTTQNIDEEGAMKEDIGMQDVYYTEDVLVEQLEVCVESLWKAERFELITHIARLIIPVYEKRHEFEKLRRLYDTLQRAYAKILEVMQSGRRLLGTYFRVAFFGQGFFEEEDGKEYIYKEPKLTTLPEISHRLLKLYGEKFGSENVKIIQDSNKVNQKDLDSKFAYIQVTYVKPFFDEKEMAERKTDFEKCHNIQRFVFETPFTLTGKKQGGVEEQCKRRTVLTTANTFPYVKKRIEVVGEKHTELKPIDVAIDEMKEKSSELAKLCSNQEVNMITLQLKLQGCVSVQVNAGPMAYARAFLDESKSGQSNKKVKDLKEIFRQFVNACSMALDINERLIKEDQYEYHEGLKANFKSMVKELSEIIHEQIFQEDMMRSLLQNSLHVFRAISGTSTDLS.

One can recognise a PH domain in the interval 162–269 (GVMKQGWLQK…WVNTIKQALL (108 aa)). The interval 274 to 302 (DRRNGSETSEGSLDDDSSSQGKPESITES) is disordered. The span at 291–302 (SSQGKPESITES) shows a compositional bias: polar residues. One can recognise a C2 DOCK-type domain in the interval 643-820 (NNHLYIYPQQ…PLFKVRAYVA (178 aa)). The interval 1224-1267 (SSTIVDKEPSGSVTQNGLSRRGESRGSMYGDPGTPDINELHRRG) is disordered. Residues 1614-2040 (RSYASTPELR…LSEIIHEQIF (427 aa)) form the DOCKER domain.

It belongs to the DOCK family.

Its function is as follows. Guanine nucleotide-exchange factor (GEF) that activates CDC42 by exchanging bound GDP for free GTP. This is Dedicator of cytokinesis protein 11 from Danio rerio (Zebrafish).